The chain runs to 390 residues: Lipid-A-disaccharide synthase (390 aa).

This sequence belongs to the LpxB family.

The catalysed reaction is a lipid X + a UDP-2-N,3-O-bis[(3R)-3-hydroxyacyl]-alpha-D-glucosamine = a lipid A disaccharide + UDP + H(+). The protein operates within bacterial outer membrane biogenesis; LPS lipid A biosynthesis. In terms of biological role, condensation of UDP-2,3-diacylglucosamine and 2,3-diacylglucosamine-1-phosphate to form lipid A disaccharide, a precursor of lipid A, a phosphorylated glycolipid that anchors the lipopolysaccharide to the outer membrane of the cell. The sequence is that of Lipid-A-disaccharide synthase from Haemophilus influenzae (strain PittGG).